The primary structure comprises 1600 residues: E3 ubiquitin-protein ligase listerin (1600 aa).

11 HEAT repeats span residues 31-65 (SSVPQDVIVPFKNLLKRDSTTKSKALEEILACVKK), 114-150 (KTLPKLVGPWVAGTFDKDKGVARAALAVSAHILDSDQ), 161-202 (GKLL…SSMA), 245-288 (YQLV…DLLR), 291-344 (ISVT…PDYA), 526-606 (RNYK…AALS), 853-904 (YTTN…DIRT), 962-986 (YASKALTELFQALVSVHGYPAGAKF), 1045-1083 (LYNVVLLNICLSVYPPAKTPVEQRKLVFALKQFTTWVQT), 1289-1324 (VDVRSYLLGWHLVFDAYNQAPLQVRKQYTDSLKADN), and 1325-1369 (SLNA…EEGT). The RING-type; degenerate zinc-finger motif lies at 1537 to 1583 (CPICYAVVSADKKLPDKRCSTCNNLFHRLCLYKWFQNSNKNTCPLCR).

The protein belongs to the LTN1 family. Component of the ribosome quality control complex (RQC), composed of the E3 ubiquitin ligase RKR1/LTN1, RQC1 and RQC2, as well as CDC48 and its ubiquitin-binding cofactors associated with the 60S ribosomal subunits.

The protein resides in the nucleus. Its subcellular location is the cytoplasm. It localises to the cytosol. It catalyses the reaction S-ubiquitinyl-[E2 ubiquitin-conjugating enzyme]-L-cysteine + [acceptor protein]-L-lysine = [E2 ubiquitin-conjugating enzyme]-L-cysteine + N(6)-ubiquitinyl-[acceptor protein]-L-lysine.. Its pathway is protein modification; protein ubiquitination. Its function is as follows. E3 ubiquitin-protein ligase component of the ribosome quality control complex (RQC), a ribosome-associated complex that mediates ubiquitination and extraction of incompletely synthesized nascent chains for proteasomal degradation. Mediates ubiquitination of proteins derived from mRNAs lacking stop codons (non-stop proteins) and other translation arrest products induced by poly-lysine sequences and tandem rare codons. Ubiquitination leads to CDC48 recruitment for extraction and degradation of the incomplete translation product. May indirectly play a role in chromatin function and transcription. The polypeptide is E3 ubiquitin-protein ligase listerin (rkr-1) (Neurospora crassa (strain ATCC 24698 / 74-OR23-1A / CBS 708.71 / DSM 1257 / FGSC 987)).